The chain runs to 439 residues: Branched-chain amino acid permease BrnQ (439 aa).

Over M1–D9 the chain is Cytoplasmic. A helical membrane pass occupies residues I10–P30. At P31 to T43 the chain is on the periplasmic side. A helical membrane pass occupies residues A44–A64. Residues K65–K79 lie on the Cytoplasmic side of the membrane. A helical transmembrane segment spans residues V80–P100. Residues R101–S118 are Periplasmic-facing. A helical transmembrane segment spans residues A119 to Y139. At P140–N149 the chain is on the cytoplasmic side. A helical membrane pass occupies residues F150 to P170. Residues A171–G189 are Periplasmic-facing. A helical transmembrane segment spans residues F190 to V210. Residues N211–R226 lie on the Cytoplasmic side of the membrane. The helical transmembrane segment at Y227 to F247 threads the bilayer. Topologically, residues R248 to G277 are periplasmic. The helical transmembrane segment at A278 to L298 threads the bilayer. The Cytoplasmic portion of the chain corresponds to T299 to T316. A helical membrane pass occupies residues L317 to I337. Position 338 (Q338) is a topological domain, periplasmic. Residues I339–F359 form a helical membrane-spanning segment. The Cytoplasmic segment spans residues T360 to R369. Residues I370 to S390 traverse the membrane as a helical segment. Residues A391–P404 lie on the Periplasmic side of the membrane. Residues L405–I425 form a helical membrane-spanning segment. Topologically, residues W426–H439 are cytoplasmic.

It belongs to the branched chain amino acid transporter family.

It localises to the cell inner membrane. In terms of biological role, liv-II branched chain amino acid transport system, which transports leucine, valine and isoleucine. The sequence is that of Branched-chain amino acid permease BrnQ from Salmonella typhimurium (strain LT2 / SGSC1412 / ATCC 700720).